Here is a 331-residue protein sequence, read N- to C-terminus: Small ribosomal subunit protein uS2 (331 aa).

The protein belongs to the universal ribosomal protein uS2 family.

The polypeptide is Small ribosomal subunit protein uS2 (Rhodopseudomonas palustris (strain ATCC BAA-98 / CGA009)).